The primary structure comprises 173 residues: Lipoprotein signal peptidase (173 aa).

The next 3 helical transmembrane spans lie at Phe-11–Thr-31, Thr-69–Met-89, and Gln-93–Val-113. Residues Asp-123 and Asp-142 contribute to the active site. Residues Pro-134–Ala-154 traverse the membrane as a helical segment.

The protein belongs to the peptidase A8 family.

The protein resides in the cell inner membrane. The enzyme catalyses Release of signal peptides from bacterial membrane prolipoproteins. Hydrolyzes -Xaa-Yaa-Zaa-|-(S,diacylglyceryl)Cys-, in which Xaa is hydrophobic (preferably Leu), and Yaa (Ala or Ser) and Zaa (Gly or Ala) have small, neutral side chains.. The protein operates within protein modification; lipoprotein biosynthesis (signal peptide cleavage). This protein specifically catalyzes the removal of signal peptides from prolipoproteins. The polypeptide is Lipoprotein signal peptidase (Sphingopyxis alaskensis (strain DSM 13593 / LMG 18877 / RB2256) (Sphingomonas alaskensis)).